Here is a 154-residue protein sequence, read N- to C-terminus: Insulin-like growth factor 1 (154 aa).

Residues 50–78 (GPETLCGAELVDALQFVCGDRGFYFNKPT) are b. 3 disulfide bridges follow: C55-C97, C67-C110, and C96-C101. Residues 79-90 (GYGSSSRRAPQT) form a c region. The segment at 91–111 (GIVDECCFRSCDLRRLEMYCA) is a. The tract at residues 112 to 119 (PLKAAKSA) is d. The propeptide at 120-154 (RSVRAQRHTDMPKAQKEVHLKNTSRGSAGNKNYRM) is e peptide. The disordered stretch occupies residues 121-154 (SVRAQRHTDMPKAQKEVHLKNTSRGSAGNKNYRM). The segment covering 126 to 139 (RHTDMPKAQKEVHL) has biased composition (basic and acidic residues). Residues 140–154 (KNTSRGSAGNKNYRM) are compositionally biased toward polar residues.

The protein belongs to the insulin family. Forms a ternary complex with IGFR1 and ITGAV:ITGB3. Forms a ternary complex with IGFR1 and ITGA6:ITGB4. Forms a ternary complex with IGFBP3 and ALS.

The protein localises to the secreted. Its function is as follows. The insulin-like growth factors, isolated from plasma, are structurally and functionally related to insulin but have a much higher growth-promoting activity. May be a physiological regulator of [1-14C]-2-deoxy-D-glucose (2DG) transport and glycogen synthesis in osteoblasts. Stimulates glucose transport in bone-derived osteoblastic (PyMS) cells and is effective at much lower concentrations than insulin, not only regarding glycogen and DNA synthesis but also with regard to enhancing glucose uptake. May play a role in synapse maturation. Ca(2+)-dependent exocytosis of IGF1 is required for sensory perception of smell in the olfactory bulb. Acts as a ligand for IGF1R. Binds to the alpha subunit of IGF1R, leading to the activation of the intrinsic tyrosine kinase activity which autophosphorylates tyrosine residues in the beta subunit thus initiating a cascade of down-stream signaling events leading to activation of the PI3K-AKT/PKB and the Ras-MAPK pathways. Binds to integrins ITGAV:ITGB3 and ITGA6:ITGB4. Its binding to integrins and subsequent ternary complex formation with integrins and IGFR1 are essential for IGF1 signaling. Induces the phosphorylation and activation of IGFR1, MAPK3/ERK1, MAPK1/ERK2 and AKT1. As part of the MAPK/ERK signaling pathway, acts as a negative regulator of apoptosis in cardiomyocytes via promotion of STUB1/CHIP-mediated ubiquitination and degradation of ICER-type isoforms of CREM. This is Insulin-like growth factor 1 from Ovis aries (Sheep).